We begin with the raw amino-acid sequence, 364 residues long: Chaperone protein DnaJ (364 aa).

A J domain is found at 4–69; the sequence is DYYEILGLSK…NKKAKYDRFG (66 aa). A CR-type zinc finger spans residues 135–213; that stretch reads GYKNNINITR…CKGKGSLTKQ (79 aa). Positions 148, 151, 165, 168, 187, 190, 201, and 204 each coordinate Zn(2+). 4 CXXCXGXG motif repeats span residues 148–155, 165–172, 187–194, and 201–208; these read CDSCLGKK, CNMCNGSG, CSKCYGEG, and CKSCKGKG.

The protein belongs to the DnaJ family. Homodimer. Zn(2+) serves as cofactor.

Its subcellular location is the cytoplasm. Functionally, participates actively in the response to hyperosmotic and heat shock by preventing the aggregation of stress-denatured proteins and by disaggregating proteins, also in an autonomous, DnaK-independent fashion. Unfolded proteins bind initially to DnaJ; upon interaction with the DnaJ-bound protein, DnaK hydrolyzes its bound ATP, resulting in the formation of a stable complex. GrpE releases ADP from DnaK; ATP binding to DnaK triggers the release of the substrate protein, thus completing the reaction cycle. Several rounds of ATP-dependent interactions between DnaJ, DnaK and GrpE are required for fully efficient folding. Also involved, together with DnaK and GrpE, in the DNA replication of plasmids through activation of initiation proteins. In Borreliella burgdorferi (strain ATCC 35210 / DSM 4680 / CIP 102532 / B31) (Borrelia burgdorferi), this protein is Chaperone protein DnaJ.